Reading from the N-terminus, the 118-residue chain is Large ribosomal subunit protein bL19 (118 aa).

It belongs to the bacterial ribosomal protein bL19 family.

Functionally, this protein is located at the 30S-50S ribosomal subunit interface and may play a role in the structure and function of the aminoacyl-tRNA binding site. This chain is Large ribosomal subunit protein bL19, found in Buchnera aphidicola subsp. Baizongia pistaciae (strain Bp).